The primary structure comprises 398 residues: tRNA-specific 2-thiouridylase MnmA (398 aa).

ATP is bound by residues Gly33–Ser40 and Met59. The tract at residues Asn119 to Asp121 is interaction with target base in tRNA. Catalysis depends on Cys124, which acts as the Nucleophile. Cys124 and Cys226 are joined by a disulfide. Gly148 serves as a coordination point for ATP. Positions Lys176–Gln178 are interaction with tRNA. The active-site Cysteine persulfide intermediate is Cys226. Residues Arg343 to Tyr344 form an interaction with tRNA region.

Belongs to the MnmA/TRMU family.

The protein localises to the cytoplasm. It carries out the reaction S-sulfanyl-L-cysteinyl-[protein] + uridine(34) in tRNA + AH2 + ATP = 2-thiouridine(34) in tRNA + L-cysteinyl-[protein] + A + AMP + diphosphate + H(+). Its function is as follows. Catalyzes the 2-thiolation of uridine at the wobble position (U34) of tRNA, leading to the formation of s(2)U34. The chain is tRNA-specific 2-thiouridylase MnmA from Psychrobacter sp. (strain PRwf-1).